The sequence spans 211 residues: B3 domain-containing protein At5g42700 (211 aa).

Positions 110-201 form a DNA-binding region, TF-B3; it reads FVKSMLQSHV…AFKVYITRVG (92 aa).

It localises to the nucleus. This Arabidopsis thaliana (Mouse-ear cress) protein is B3 domain-containing protein At5g42700.